The sequence spans 185 residues: Large ribosomal subunit protein bL25 (185 aa).

This sequence belongs to the bacterial ribosomal protein bL25 family. CTC subfamily. As to quaternary structure, part of the 50S ribosomal subunit; part of the 5S rRNA/L5/L18/L25 subcomplex. Contacts the 5S rRNA. Binds to the 5S rRNA independently of L5 and L18.

In terms of biological role, this is one of the proteins that binds to the 5S RNA in the ribosome where it forms part of the central protuberance. In Chlamydia trachomatis serovar A (strain ATCC VR-571B / DSM 19440 / HAR-13), this protein is Large ribosomal subunit protein bL25.